Reading from the N-terminus, the 448-residue chain is Methylenetetrahydrofolate--tRNA-(uracil-5-)-methyltransferase TrmFO (448 aa).

Residue 13–18 (GAGLAG) coordinates FAD.

It belongs to the MnmG family. TrmFO subfamily. FAD is required as a cofactor.

Its subcellular location is the cytoplasm. The enzyme catalyses uridine(54) in tRNA + (6R)-5,10-methylene-5,6,7,8-tetrahydrofolate + NADH + H(+) = 5-methyluridine(54) in tRNA + (6S)-5,6,7,8-tetrahydrofolate + NAD(+). The catalysed reaction is uridine(54) in tRNA + (6R)-5,10-methylene-5,6,7,8-tetrahydrofolate + NADPH + H(+) = 5-methyluridine(54) in tRNA + (6S)-5,6,7,8-tetrahydrofolate + NADP(+). In terms of biological role, catalyzes the folate-dependent formation of 5-methyl-uridine at position 54 (M-5-U54) in all tRNAs. The polypeptide is Methylenetetrahydrofolate--tRNA-(uracil-5-)-methyltransferase TrmFO (Streptococcus pyogenes serotype M3 (strain ATCC BAA-595 / MGAS315)).